Reading from the N-terminus, the 1728-residue chain is U3 small nucleolar RNA-associated protein 10 (1728 aa).

7 HEAT repeats span residues 540–578 (DKDFQAIIPYCAVALSDPAKKVRRAAADLIAVLGSLVKE), 881–926 (PANH…MMPA), 986–1024 (FMGSSEVIPPLIDTFRRRGRNVVASTKDLLASFVTAYEH), 1191–1229 (LLSIAEFIKSVEALLDRPNVGLRQKVLRALELRVDSEST), 1235–1274 (REALLAFLPQLTAVIRESDDMSYKHTAVTCVDKISEKYGK), 1622–1662 (ADAT…GQAA), and 1683–1721 (LQALPEMLPYISELQDDDDEVVERENRRWIVEIEEKLGE).

Belongs to the HEATR1/UTP10 family. In terms of assembly, component of the ribosomal small subunit (SSU) processome.

The protein resides in the nucleus. The protein localises to the nucleolus. Involved in nucleolar processing of pre-18S ribosomal RNA. Involved in ribosome biosynthesis. The polypeptide is U3 small nucleolar RNA-associated protein 10 (Chaetomium globosum (strain ATCC 6205 / CBS 148.51 / DSM 1962 / NBRC 6347 / NRRL 1970) (Soil fungus)).